Consider the following 209-residue polypeptide: uncharacterized protein (209 aa).

Positions Leu-13–Asp-75 form a coiled coil. Residues Ala-107–Thr-135 form a disordered region. A compositionally biased stretch (polar residues) spans Leu-110–Gln-119. Residues Ser-120–Ser-133 are compositionally biased toward low complexity.

This sequence belongs to the asfivirus K205R family.

It is found in the host cytoplasm. Its function is as follows. Induces host endoplasmic reticulum stress and consequently activates autophagy and NF-kappa-B signaling pathway. In turn, may induce autophagy-mediated STING1 degradation and innate immune evasion. This is an uncharacterized protein from Ornithodoros (relapsing fever ticks).